Consider the following 449-residue polypeptide: Glutamyl-tRNA reductase (449 aa).

Substrate is bound by residues 48 to 51 (TCNR), serine 99, 104 to 106 (EDQ), and glutamine 110. Cysteine 49 (nucleophile) is an active-site residue. An NADP(+)-binding site is contributed by 179–184 (GAGEIG).

This sequence belongs to the glutamyl-tRNA reductase family. As to quaternary structure, homodimer.

The enzyme catalyses (S)-4-amino-5-oxopentanoate + tRNA(Glu) + NADP(+) = L-glutamyl-tRNA(Glu) + NADPH + H(+). It participates in porphyrin-containing compound metabolism; protoporphyrin-IX biosynthesis; 5-aminolevulinate from L-glutamyl-tRNA(Glu): step 1/2. Its function is as follows. Catalyzes the NADPH-dependent reduction of glutamyl-tRNA(Glu) to glutamate 1-semialdehyde (GSA). In Methanosarcina barkeri (strain Fusaro / DSM 804), this protein is Glutamyl-tRNA reductase.